The primary structure comprises 98 residues: DNA-binding protein Fis (98 aa).

The H-T-H motif DNA-binding region spans 74–93 (QTRAATMMGINRGTLRKKLK).

It belongs to the transcriptional regulatory Fis family. In terms of assembly, homodimer.

Its function is as follows. Activates ribosomal RNA transcription. Plays a direct role in upstream activation of rRNA promoters. The polypeptide is DNA-binding protein Fis (Vibrio parahaemolyticus serotype O3:K6 (strain RIMD 2210633)).